The sequence spans 71 residues: Hainantoxin-X-2 (71 aa).

A signal peptide spans 1–26 (MKTAIFTVVLALAVFAVLCLVVSTHA). A propeptide spanning residues 27–43 (ERHSKTDMEDSPMIQER) is cleaved from the precursor. 2 cysteine pairs are disulfide-bonded: Cys52–Cys65 and Cys61–Cys70.

This sequence belongs to the neurotoxin 36 family. 02 subfamily. In terms of tissue distribution, expressed by the venom gland.

It is found in the secreted. Its function is as follows. Reversibly blocks N-type calcium channels (Cav2.2/CACNA1B) in rat dorsal root ganglion cells. Elicits no toxic symptoms in either vertebrates or invertebrates during a period of 48 hours post-injection, when it was assayed in vivo by direct injection into mice and cockroaches. In Cyriopagopus hainanus (Chinese bird spider), this protein is Hainantoxin-X-2.